A 125-amino-acid chain; its full sequence is Cytochrome c' (125 aa).

5 residues coordinate heme c: Arg10, Glu67, Cys116, Cys119, and His120.

As to quaternary structure, homodimer. In terms of processing, binds 1 heme c group covalently per subunit.

Cytochrome c' is the most widely occurring bacterial c-type cytochrome. Cytochromes c' are high-spin proteins and the heme has no sixth ligand. Their exact function is not known. The chain is Cytochrome c' from Pararhodospirillum photometricum (Rhodospirillum photometricum).